A 76-amino-acid polypeptide reads, in one-letter code: Large ribosomal subunit protein eL20 (76 aa).

It belongs to the eukaryotic ribosomal protein eL20 family. In terms of assembly, part of the 50S ribosomal subunit. Binds 23S rRNA.

The chain is Large ribosomal subunit protein eL20 from Methanococcus maripaludis (strain DSM 14266 / JCM 13030 / NBRC 101832 / S2 / LL).